The chain runs to 143 residues: Putative phosphotransferase IIA component SgcA (143 aa).

A PTS EIIA type-2 domain is found at 1-143; the sequence is MINDIKWVQA…DDALFALVSG (143 aa). The active-site Tele-phosphohistidine intermediate is the His-63.

Its subcellular location is the cytoplasm. Its function is as follows. The phosphoenolpyruvate-dependent sugar phosphotransferase system (sugar PTS), a major carbohydrate active -transport system, catalyzes the phosphorylation of incoming sugar substrates concomitantly with their translocation across the cell membrane. This chain is Putative phosphotransferase IIA component SgcA (sgcA), found in Escherichia coli (strain K12).